Reading from the N-terminus, the 341-residue chain is L-threonine 3-dehydrogenase (341 aa).

Cys-38 contributes to the Zn(2+) binding site. Residues Thr-40 and His-43 each act as charge relay system in the active site. Zn(2+) contacts are provided by His-63, Glu-64, Cys-93, Cys-96, Cys-99, and Cys-107. NAD(+) contacts are provided by residues Ile-175, Asp-195, Arg-200, 262–264 (LGI), and 286–287 (IY).

The protein belongs to the zinc-containing alcohol dehydrogenase family. As to quaternary structure, homotetramer. Zn(2+) serves as cofactor.

It is found in the cytoplasm. The catalysed reaction is L-threonine + NAD(+) = (2S)-2-amino-3-oxobutanoate + NADH + H(+). Its pathway is amino-acid degradation; L-threonine degradation via oxydo-reductase pathway; glycine from L-threonine: step 1/2. In terms of biological role, catalyzes the NAD(+)-dependent oxidation of L-threonine to 2-amino-3-ketobutyrate. This Edwardsiella ictaluri (strain 93-146) protein is L-threonine 3-dehydrogenase.